The sequence spans 305 residues: tRNA dimethylallyltransferase (305 aa).

8-15 (GPTASGKT) contacts ATP. 10-15 (TASGKT) is a binding site for substrate. An interaction with substrate tRNA region spans residues 33 to 36 (DSQQ).

It belongs to the IPP transferase family. Monomer. Requires Mg(2+) as cofactor.

It catalyses the reaction adenosine(37) in tRNA + dimethylallyl diphosphate = N(6)-dimethylallyladenosine(37) in tRNA + diphosphate. Its function is as follows. Catalyzes the transfer of a dimethylallyl group onto the adenine at position 37 in tRNAs that read codons beginning with uridine, leading to the formation of N6-(dimethylallyl)adenosine (i(6)A). This is tRNA dimethylallyltransferase from Anaeromyxobacter sp. (strain K).